Here is a 470-residue protein sequence, read N- to C-terminus: uncharacterized protein (470 aa).

The tract at residues 439–470 is disordered; the sequence is SIKSSKSKKQLKSSKSKKPIKHTKTKNIYVET. Residues 443–463 show a composition bias toward basic residues; that stretch reads SKSKKQLKSSKSKKPIKHTKT.

This is an uncharacterized protein from Acanthamoeba polyphaga mimivirus (APMV).